The chain runs to 58 residues: Small ribosomal subunit protein bS21 (58 aa).

Residues Asp-31–Arg-58 form a disordered region. Basic residues predominate over residues Tyr-45–Arg-58.

Belongs to the bacterial ribosomal protein bS21 family.

The chain is Small ribosomal subunit protein bS21 from Prochlorococcus marinus (strain MIT 9303).